We begin with the raw amino-acid sequence, 404 residues long: RNA exonuclease 3 (404 aa).

The segment covering 1 to 17 has biased composition (polar residues); the sequence is MNNNAQNKRSLDDSNGN. The disordered stretch occupies residues 1–29; it reads MNNNAQNKRSLDDSNGNDTKRPKQEDPKY. Basic and acidic residues predominate over residues 18-28; that stretch reads DTKRPKQEDPK. The 149-residue stretch at 241 to 389 folds into the Exonuclease domain; sequence VLGIDCEMGF…EDSIAAIDIV (149 aa).

It belongs to the REXO1/REXO3 family.

The protein resides in the cytoplasm. It is found in the nucleus. Its function is as follows. 3' to 5' exoribonuclease required for proper 3' end maturation of MRP RNA and of the U5L snRNA. The sequence is that of RNA exonuclease 3 (REX3) from Candida albicans (strain SC5314 / ATCC MYA-2876) (Yeast).